Here is a 262-residue protein sequence, read N- to C-terminus: MTGELSPIDKAKFVAAKRAADLVEDGMRVGLGTGSTAAWLVRCLGDMVRKEGLKMRGVPTSTRTAQLAREVGIEVITLDEARWLDITIDGADEFDGDLNLIKGGGGALLQEKIVATASDQMVVIADLGKEVSRLGAFPLPVEVIPFGWQTTQALLEETLISMDVLGRTATLRMNGDTPFVTDEGNHILDLHLQRIGNARQLALVLNQIPGVVENGLFIDICDTVVVGHGDGRVEIRDINQGTVEHDRLDFVESDNLFTDLAD.

Residues 33–36 (TGST), 89–92 (DGAD), and 102–105 (KGGG) each bind substrate. The active-site Proton acceptor is glutamate 111. Lysine 129 provides a ligand contact to substrate.

This sequence belongs to the ribose 5-phosphate isomerase family. As to quaternary structure, homodimer.

It catalyses the reaction aldehydo-D-ribose 5-phosphate = D-ribulose 5-phosphate. It functions in the pathway carbohydrate degradation; pentose phosphate pathway; D-ribose 5-phosphate from D-ribulose 5-phosphate (non-oxidative stage): step 1/1. Functionally, catalyzes the reversible conversion of ribose-5-phosphate to ribulose 5-phosphate. This Ruegeria pomeroyi (strain ATCC 700808 / DSM 15171 / DSS-3) (Silicibacter pomeroyi) protein is Ribose-5-phosphate isomerase A.